A 366-amino-acid chain; its full sequence is Histidinol-phosphate aminotransferase 2 (366 aa).

Residues 1-11 are compositionally biased toward polar residues; that stretch reads MQVKDQLSSLQ. Residues 1–21 form a disordered region; sequence MQVKDQLSSLQPYKPGKSPEQ. Position 222 is an N6-(pyridoxal phosphate)lysine (Lys222).

It belongs to the class-II pyridoxal-phosphate-dependent aminotransferase family. Histidinol-phosphate aminotransferase subfamily. As to quaternary structure, homodimer. Pyridoxal 5'-phosphate serves as cofactor.

The catalysed reaction is L-histidinol phosphate + 2-oxoglutarate = 3-(imidazol-4-yl)-2-oxopropyl phosphate + L-glutamate. The protein operates within amino-acid biosynthesis; L-histidine biosynthesis; L-histidine from 5-phospho-alpha-D-ribose 1-diphosphate: step 7/9. The protein is Histidinol-phosphate aminotransferase 2 (hisC2) of Bacillus cereus (strain ATCC 14579 / DSM 31 / CCUG 7414 / JCM 2152 / NBRC 15305 / NCIMB 9373 / NCTC 2599 / NRRL B-3711).